Here is a 161-residue protein sequence, read N- to C-terminus: Putative ecotin-like protein (161 aa).

An N-terminal signal peptide occupies residues 1–24 (MSLRPIETAIASLTMLMLQGCAHA).

Belongs to the protease inhibitor I11 (ecotin) family.

In Methylobacillus flagellatus (strain ATCC 51484 / DSM 6875 / VKM B-1610 / KT), this protein is Putative ecotin-like protein.